We begin with the raw amino-acid sequence, 345 residues long: Annexin A9 (345 aa).

Annexin repeat units lie at residues 41–112, 113–184, 197–266, and 270–341; these read FSVD…ALLQ, PAAQ…ALSK, NLEE…SLAS, and NTAL…ALCR.

This sequence belongs to the annexin family. As to quaternary structure, homodimer.

May act as a low affinity receptor for acetylcholine. In Mus musculus (Mouse), this protein is Annexin A9 (Anxa9).